The sequence spans 683 residues: Zinc finger protein 510 (683 aa).

The region spanning 46–117 (VSFKDVTIEF…EEEFSNQSHP (72 aa)) is the KRAB domain. The segment at 254 to 276 (FECNKIGKAFNDKANCVKHNSSH) adopts a C2H2-type 1; degenerate zinc-finger fold. 9 consecutive C2H2-type zinc fingers follow at residues 404–426 (YKCNECGKSFCQKGHLIQHQRTH), 432–454 (FECSECGKTFSQKSHLSTHQRIH), 460–482 (YKCNECGKTFVQKSTLRGHQRIH), 488–510 (YECSECGKTFVQKSTLRDHHRIH), 516–538 (FQCNQCGKTFGQKSNLRIHQRTH), 544–566 (YQCNECEKSFWRKDHLIQHQKTH), 572–594 (FKCNECGKTFARTSTLRVHQRIH), 600–622 (FKCNECGKKFVRKAILSDHQRIH), and 628–650 (FQCNKCGKTFGQKSNLRIHQRTH).

Belongs to the krueppel C2H2-type zinc-finger protein family.

It localises to the nucleus. May be involved in transcriptional regulation. This is Zinc finger protein 510 (ZNF510) from Homo sapiens (Human).